A 385-amino-acid polypeptide reads, in one-letter code: MSQSPRIAVVGAGLGGAAAAKLLLQEGFNVRVYEQAPSFSRLGAGIHVGPNVMKILRRIGIEDALNEQGSHPDYWYSRHWQTGDVLAQIPLGDYAVKEYGASYLTVHRGDFHALLVEALPDSVMAYGKFLTKVEDRGNVVVMHFADGTTEEADIVIGPDGVNSRIREELLGPELPKYAGYLAHRAVFPTPEVKAGMLPFDACVKWWSDDRHMMTYFVTGKADELYYVTGVPVEKWDLNDRWLESSKEEMREAFSGWHPTVQALIDATVEVTKWSLLERDPLPLWSRGRLVLLGDACHPMKPHMAQGAAMAIEDGAMLARCLKEVGAHNHELAFALYEANRAERASKVQRISHDNTWLRTNEDPSWCFGYDVFNVPLVEPKVKAAA.

A signal peptide spans 1–20 (MSQSPRIAVVGAGLGGAAAA). FAD-binding positions include Gly-15, 34-35 (EQ), His-47, Arg-108, and Leu-130. His-47 serves as the catalytic Proton acceptor. The Proton acceptor role is filled by Tyr-215. FAD-binding positions include Asp-294 and 307–308 (AA).

It belongs to the 6-hydroxynicotinate 3-monooxygenase family. In terms of assembly, monomer. FAD is required as a cofactor.

The catalysed reaction is 6-hydroxynicotinate + NADH + O2 + 2 H(+) = 2,5-dihydroxypyridine + CO2 + NAD(+) + H2O. With respect to regulation, inhibited competitively by nicotinic acid with a Ki of 0.49 mM. Inhibited by thiol-specific compounds p-chloromercuribenzoate, DTNB, Ag(2)SO(4), HgCl(2), CuCl(2) and N-ethylmaleimide. No inhibition by o-phenanthroline, 8-hydroxyquinoline, EDTA, disodium 4,5-dihydroxy-m-benzenedisulfonate, fluoride, azide, KCl, LiCl, NaCl, BaCl(2), MnCl(2), MgCl(2), PBCl, ZnCl(2), CoCl(2), SnCl(2), FeSO(4), FeCl(3), NiCl(2), CdCl(2), AlCl(3), iodoacetic acid, hydro-xylamine, phenylhydrazine, semicarbazide, cysteamine, alpha,alpha-dipyridyl and urea. Its function is as follows. Flavin-dependent monooxygenase (FMO) that catalyzes the decarboxylative hydroxylation of 6-hydroxynicotinic acid (6-HNA) to 2,5-dihydroxypyridine (2,5-DHP) with concomitant oxidation of NADH, a step in the aerobic nicotinate degradation pathway. Uses NADH in preference to NADPH as an electron donor. The polypeptide is 6-hydroxynicotinate 3-monooxygenase (nicC) (Pseudomonas fluorescens).